Here is a 334-residue protein sequence, read N- to C-terminus: Ornithine carbamoyltransferase (334 aa).

Residues 57 to 60, Gln-84, Arg-108, and 135 to 138 each bind carbamoyl phosphate; these read STRT and HPTQ. L-ornithine contacts are provided by residues Asn-169, Asp-233, and 237–238; that span reads SM. Carbamoyl phosphate is bound by residues 275–276 and Arg-320; that span reads CL.

Belongs to the aspartate/ornithine carbamoyltransferase superfamily. OTCase family.

It localises to the cytoplasm. It catalyses the reaction carbamoyl phosphate + L-ornithine = L-citrulline + phosphate + H(+). Its pathway is amino-acid biosynthesis; L-arginine biosynthesis; L-arginine from L-ornithine and carbamoyl phosphate: step 1/3. In terms of biological role, reversibly catalyzes the transfer of the carbamoyl group from carbamoyl phosphate (CP) to the N(epsilon) atom of ornithine (ORN) to produce L-citrulline. The protein is Ornithine carbamoyltransferase (argF) of Pasteurella multocida (strain Pm70).